The sequence spans 77 residues: Conotoxin Vc1 (77 aa).

The first 22 residues, 1–22 (MRTSGRLLLLCLAVGLLLESQA), serve as a signal peptide directing secretion. 2 propeptides span residues 23–58 (HPNA…KGQR) and 73–77 (RRSFY).

It belongs to the conotoxin H superfamily. Expressed by the venom duct.

Its subcellular location is the secreted. In terms of biological role, probable toxin. The sequence is that of Conotoxin Vc1 from Conus victoriae (Queen Victoria cone).